The chain runs to 367 residues: tRNA 2-selenouridine synthase (367 aa).

A Rhodanese domain is found at 12-136 (FLNDRPLMDA…LRGFLIDTLE (125 aa)). Cys95 acts as the S-selanylcysteine intermediate in catalysis.

This sequence belongs to the SelU family. Monomer.

It carries out the reaction 5-methylaminomethyl-2-thiouridine(34) in tRNA + selenophosphate + (2E)-geranyl diphosphate + H2O + H(+) = 5-methylaminomethyl-2-selenouridine(34) in tRNA + (2E)-thiogeraniol + phosphate + diphosphate. The enzyme catalyses 5-methylaminomethyl-2-thiouridine(34) in tRNA + (2E)-geranyl diphosphate = 5-methylaminomethyl-S-(2E)-geranyl-thiouridine(34) in tRNA + diphosphate. It catalyses the reaction 5-methylaminomethyl-S-(2E)-geranyl-thiouridine(34) in tRNA + selenophosphate + H(+) = 5-methylaminomethyl-2-(Se-phospho)selenouridine(34) in tRNA + (2E)-thiogeraniol. The catalysed reaction is 5-methylaminomethyl-2-(Se-phospho)selenouridine(34) in tRNA + H2O = 5-methylaminomethyl-2-selenouridine(34) in tRNA + phosphate. Its function is as follows. Involved in the post-transcriptional modification of the uridine at the wobble position (U34) of tRNA(Lys), tRNA(Glu) and tRNA(Gln). Catalyzes the conversion of 2-thiouridine (S2U-RNA) to 2-selenouridine (Se2U-RNA). Acts in a two-step process involving geranylation of 2-thiouridine (S2U) to S-geranyl-2-thiouridine (geS2U) and subsequent selenation of the latter derivative to 2-selenouridine (Se2U) in the tRNA chain. This Pseudomonas fluorescens (strain Pf0-1) protein is tRNA 2-selenouridine synthase.